The sequence spans 123 residues: Small ribosomal subunit protein uS12 (123 aa).

Residues 1 to 31 (MPTIQQLVRKGRHSKKAKVATAGLKGSPQRR) are disordered. The span at 9–18 (RKGRHSKKAK) shows a compositional bias: basic residues. Asp89 is modified (3-methylthioaspartic acid).

This sequence belongs to the universal ribosomal protein uS12 family. As to quaternary structure, part of the 30S ribosomal subunit. Contacts proteins S8 and S17. May interact with IF1 in the 30S initiation complex.

Functionally, with S4 and S5 plays an important role in translational accuracy. Its function is as follows. Interacts with and stabilizes bases of the 16S rRNA that are involved in tRNA selection in the A site and with the mRNA backbone. Located at the interface of the 30S and 50S subunits, it traverses the body of the 30S subunit contacting proteins on the other side and probably holding the rRNA structure together. The combined cluster of proteins S8, S12 and S17 appears to hold together the shoulder and platform of the 30S subunit. The protein is Small ribosomal subunit protein uS12 of Corynebacterium aurimucosum (strain ATCC 700975 / DSM 44827 / CIP 107346 / CN-1) (Corynebacterium nigricans).